Here is a 118-residue protein sequence, read N- to C-terminus: Protein TusC (118 aa).

The protein belongs to the DsrF/TusC family. As to quaternary structure, heterohexamer, formed by a dimer of trimers. The hexameric TusBCD complex contains 2 copies each of TusB, TusC and TusD. The TusBCD complex interacts with TusE.

The protein resides in the cytoplasm. Functionally, part of a sulfur-relay system required for 2-thiolation of 5-methylaminomethyl-2-thiouridine (mnm(5)s(2)U) at tRNA wobble positions. The sequence is that of Protein TusC from Salmonella paratyphi C (strain RKS4594).